A 192-amino-acid chain; its full sequence is Xanthine phosphoribosyltransferase (192 aa).

The xanthine site is built by Leu20 and Asn27. Residue 128–132 (ANGDA) coordinates 5-phospho-alpha-D-ribose 1-diphosphate. A xanthine-binding site is contributed by Lys156.

Belongs to the purine/pyrimidine phosphoribosyltransferase family. Xpt subfamily. Homodimer.

It is found in the cytoplasm. The enzyme catalyses XMP + diphosphate = xanthine + 5-phospho-alpha-D-ribose 1-diphosphate. It functions in the pathway purine metabolism; XMP biosynthesis via salvage pathway; XMP from xanthine: step 1/1. In terms of biological role, converts the preformed base xanthine, a product of nucleic acid breakdown, to xanthosine 5'-monophosphate (XMP), so it can be reused for RNA or DNA synthesis. This is Xanthine phosphoribosyltransferase from Staphylococcus aureus (strain JH1).